Reading from the N-terminus, the 417-residue chain is D-inositol 3-phosphate glycosyltransferase (417 aa).

1D-myo-inositol 3-phosphate is bound at residue histidine 15. UDP-N-acetyl-alpha-D-glucosamine contacts are provided by residues 21 to 22 (QP) and glycine 29. 1D-myo-inositol 3-phosphate-binding positions include 26 to 31 (DAGGMN), lysine 84, tyrosine 117, threonine 141, and arginine 161. 3 residues coordinate UDP-N-acetyl-alpha-D-glucosamine: arginine 241, lysine 246, and valine 299. Positions 308, 309, and 311 each coordinate Mg(2+). Glutamate 321 and glutamate 329 together coordinate UDP-N-acetyl-alpha-D-glucosamine. Residue threonine 335 coordinates Mg(2+).

This sequence belongs to the glycosyltransferase group 1 family. MshA subfamily. As to quaternary structure, homodimer.

It carries out the reaction 1D-myo-inositol 3-phosphate + UDP-N-acetyl-alpha-D-glucosamine = 1D-myo-inositol 2-acetamido-2-deoxy-alpha-D-glucopyranoside 3-phosphate + UDP + H(+). Functionally, catalyzes the transfer of a N-acetyl-glucosamine moiety to 1D-myo-inositol 3-phosphate to produce 1D-myo-inositol 2-acetamido-2-deoxy-glucopyranoside 3-phosphate in the mycothiol biosynthesis pathway. This Xylanimonas cellulosilytica (strain DSM 15894 / JCM 12276 / CECT 5975 / KCTC 9989 / LMG 20990 / NBRC 107835 / XIL07) protein is D-inositol 3-phosphate glycosyltransferase.